A 115-amino-acid polypeptide reads, in one-letter code: NADH-ubiquinone oxidoreductase chain 3 (115 aa).

3 consecutive transmembrane segments (helical) span residues 4–24 (FIVM…AFWL), 55–75 (FFLV…LLPL), and 86–106 (ITML…AYEW).

It belongs to the complex I subunit 3 family. As to quaternary structure, core subunit of respiratory chain NADH dehydrogenase (Complex I) which is composed of 45 different subunits. Interacts with TMEM186. Interacts with TMEM242.

It localises to the mitochondrion inner membrane. It catalyses the reaction a ubiquinone + NADH + 5 H(+)(in) = a ubiquinol + NAD(+) + 4 H(+)(out). Functionally, core subunit of the mitochondrial membrane respiratory chain NADH dehydrogenase (Complex I) which catalyzes electron transfer from NADH through the respiratory chain, using ubiquinone as an electron acceptor. Essential for the catalytic activity of complex I. The polypeptide is NADH-ubiquinone oxidoreductase chain 3 (Reithrodontomys fulvescens (Fulvous harvest mouse)).